A 179-amino-acid chain; its full sequence is Large ribosomal subunit protein uL5 (179 aa).

Belongs to the universal ribosomal protein uL5 family. In terms of assembly, part of the 50S ribosomal subunit; part of the 5S rRNA/L5/L18/L25 subcomplex. Contacts the 5S rRNA and the P site tRNA. Forms a bridge to the 30S subunit in the 70S ribosome.

Functionally, this is one of the proteins that bind and probably mediate the attachment of the 5S RNA into the large ribosomal subunit, where it forms part of the central protuberance. In the 70S ribosome it contacts protein S13 of the 30S subunit (bridge B1b), connecting the 2 subunits; this bridge is implicated in subunit movement. Contacts the P site tRNA; the 5S rRNA and some of its associated proteins might help stabilize positioning of ribosome-bound tRNAs. In Proteus mirabilis (strain HI4320), this protein is Large ribosomal subunit protein uL5.